The chain runs to 287 residues: 4-hydroxybenzoate octaprenyltransferase (287 aa).

6 helical membrane-spanning segments follow: residues 41–61 (WPLI…GCAM), 89–109 (WEAV…ILPL), 133–153 (FFAI…PMAF), 158–178 (NTVP…SIAY), 218–238 (LGIY…WVGW), and 267–287 (NNWL…MAGS).

Belongs to the UbiA prenyltransferase family. Mg(2+) serves as cofactor.

It is found in the cell inner membrane. It catalyses the reaction all-trans-octaprenyl diphosphate + 4-hydroxybenzoate = 4-hydroxy-3-(all-trans-octaprenyl)benzoate + diphosphate. The protein operates within cofactor biosynthesis; ubiquinone biosynthesis. Its function is as follows. Catalyzes the prenylation of para-hydroxybenzoate (PHB) with an all-trans polyprenyl group. Mediates the second step in the final reaction sequence of ubiquinone-8 (UQ-8) biosynthesis, which is the condensation of the polyisoprenoid side chain with PHB, generating the first membrane-bound Q intermediate 3-octaprenyl-4-hydroxybenzoate. This is 4-hydroxybenzoate octaprenyltransferase from Burkholderia multivorans (strain ATCC 17616 / 249).